The following is a 502-amino-acid chain: D-erythritol 1-phosphate dehydrogenase (502 aa).

Asp8–Glu36 provides a ligand contact to FAD.

Belongs to the FAD-dependent glycerol-3-phosphate dehydrogenase family. Requires FAD as cofactor.

It carries out the reaction D-erythritol 1-phosphate + NADP(+) = D-erythrulose 1-phosphate + NADPH + H(+). It participates in carbohydrate metabolism; erythritol degradation. Catalyzes the oxydation of D-erythritol 1-phosphate to D-erythrulose 1-phosphate. The protein is D-erythritol 1-phosphate dehydrogenase of Brucella abortus (strain 2308).